The chain runs to 134 residues: Large ribosomal subunit protein uL16c (134 aa).

The protein belongs to the universal ribosomal protein uL16 family. As to quaternary structure, part of the 50S ribosomal subunit.

It localises to the plastid. The protein resides in the chloroplast. This chain is Large ribosomal subunit protein uL16c, found in Oltmannsiellopsis viridis (Marine flagellate).